We begin with the raw amino-acid sequence, 283 residues long: Bifunctional protein FolD (283 aa).

NADP(+) contacts are provided by residues 166–168 (GRS), Ser-191, and Thr-232.

This sequence belongs to the tetrahydrofolate dehydrogenase/cyclohydrolase family. Homodimer.

It carries out the reaction (6R)-5,10-methylene-5,6,7,8-tetrahydrofolate + NADP(+) = (6R)-5,10-methenyltetrahydrofolate + NADPH. It catalyses the reaction (6R)-5,10-methenyltetrahydrofolate + H2O = (6R)-10-formyltetrahydrofolate + H(+). It functions in the pathway one-carbon metabolism; tetrahydrofolate interconversion. Catalyzes the oxidation of 5,10-methylenetetrahydrofolate to 5,10-methenyltetrahydrofolate and then the hydrolysis of 5,10-methenyltetrahydrofolate to 10-formyltetrahydrofolate. This Halothermothrix orenii (strain H 168 / OCM 544 / DSM 9562) protein is Bifunctional protein FolD.